The chain runs to 2253 residues: Polycystin family receptor for egg jelly (2253 aa).

Residues 1–19 (MRPGPALLLLGVGLSLSVG) form the signal peptide. Residues 20–1184 (RLPLPPVPRG…NIIKSLHQNP (1165 aa)) lie on the Extracellular side of the membrane. Residues 154–169 (RPASPAARVSPRSAAP) are compositionally biased toward low complexity. Residues 154–177 (RPASPAARVSPRSAAPGPRPQQGF) form a disordered region. N-linked (GlcNAc...) asparagine glycans are attached at residues asparagine 197, asparagine 242, asparagine 295, asparagine 306, asparagine 345, asparagine 349, asparagine 481, asparagine 674, asparagine 849, asparagine 890, asparagine 923, asparagine 939, asparagine 958, and asparagine 965. Residues 215–913 (CVIQRVRINT…STMFCDFTND (699 aa)) enclose the REJ domain. A helical membrane pass occupies residues 1185 to 1205 (VTLFTVLFIILLYVGLAFWAL). At 1206–1389 (YRDEMDQHLR…VAKTFNRLQR (184 aa)) the chain is on the cytoplasmic side. The 118-residue stretch at 1230–1347 (LCYLVTIFTG…TLDRTFHVTH (118 aa)) folds into the PLAT domain. A helical membrane pass occupies residues 1390 to 1410 (LSCCLAMLLSSLLCNIMFFNL). The Extracellular portion of the chain corresponds to 1411 to 1427 (NRQEQTESRERKYMRSM). Residues 1428 to 1448 (MIGIESVLITIPVQLLITFLF) traverse the membrane as a helical segment. The Cytoplasmic segment spans residues 1449 to 1576 (TCSQRKPQAD…KPRIVLPWWC (128 aa)). A disordered region spans residues 1494–1562 (PREVAKPASK…EQHPSQKDLQ (69 aa)). Residues 1517-1527 (SKPKHRHRKAQ) are compositionally biased toward basic residues. Residues 1549-1558 (DVHSEQHPSQ) show a composition bias toward basic and acidic residues. A helical membrane pass occupies residues 1577 to 1597 (VYVAWFLVFATSSISSFFIVF). Over 1598–1607 (YGLTYGYDKS) the chain is Extracellular. A helical transmembrane segment spans residues 1608-1628 (IEWLFASFCSFCQSVLLVQPS). Residues 1629-1708 (KIILLSGFRT…RKKRIKRRAL (80 aa)) are Cytoplasmic-facing. The chain crosses the membrane as a helical span at residues 1709–1729 (LFLSYILTHFIFLALLLILIV). Residues 1730–1966 (LLRHTDCFYY…FDRKASAEIY (237 aa)) are Extracellular-facing. Asparagine 1836, asparagine 1893, and asparagine 1944 each carry an N-linked (GlcNAc...) asparagine glycan. The chain crosses the membrane as a helical span at residues 1967-1987 (LYVAILIFFLAYVVDEGCIIM). Residues 1988–1996 (QERASYVRS) are Cytoplasmic-facing. A helical membrane pass occupies residues 1997 to 2017 (VYNLLNFALKCIFTVLIVLFL). Residues 2018–2042 (RKHFLATGIIRFYLSNPEDFIPFHA) are Extracellular-facing. The helical transmembrane segment at 2043–2063 (VSQVDHIMRIILGFLLFLTIL) threads the bilayer. At 2064-2091 (KTLRYSRFFYDVRLAQRAIQAALPGICH) the chain is on the cytoplasmic side. Residues 2092 to 2112 (MAFVVSVYFFVYMAFGYLVFG) form a helical membrane-spanning segment. The Extracellular portion of the chain corresponds to 2113 to 2145 (QHEWNYSNLIHSTQTVFSYCVSAFQNTEFSNNR). The chain crosses the membrane as a helical span at residues 2146 to 2166 (ILGVLFLSSFMLVMICVLINL). Over 2167 to 2253 (FQAVILSAYE…NGKKMVYLVV (87 aa)) the chain is Cytoplasmic.

This sequence belongs to the polycystin family. As to expression, exclusively expressed in testis.

It localises to the cell membrane. It is found in the cytoplasmic vesicle. The protein localises to the secretory vesicle. The protein resides in the acrosome membrane. Its subcellular location is the nucleus. Testis-specific protein that controls sperm transport and the timing of zona pellucida-evoked exocytosis of the sperm acrosome. The protein is Polycystin family receptor for egg jelly of Homo sapiens (Human).